The sequence spans 243 residues: Pyridoxine 5'-phosphate synthase (243 aa).

Asn-7 contributes to the 3-amino-2-oxopropyl phosphate binding site. 9–10 contacts 1-deoxy-D-xylulose 5-phosphate; it reads DH. Arg-18 contacts 3-amino-2-oxopropyl phosphate. The Proton acceptor role is filled by His-43. The 1-deoxy-D-xylulose 5-phosphate site is built by Arg-45 and His-50. The active-site Proton acceptor is the Glu-70. 1-deoxy-D-xylulose 5-phosphate is bound at residue Thr-100. Catalysis depends on His-190, which acts as the Proton donor. 3-amino-2-oxopropyl phosphate contacts are provided by residues Gly-191 and 212-213; that span reads GH.

It belongs to the PNP synthase family. As to quaternary structure, homooctamer; tetramer of dimers.

It localises to the cytoplasm. The enzyme catalyses 3-amino-2-oxopropyl phosphate + 1-deoxy-D-xylulose 5-phosphate = pyridoxine 5'-phosphate + phosphate + 2 H2O + H(+). The protein operates within cofactor biosynthesis; pyridoxine 5'-phosphate biosynthesis; pyridoxine 5'-phosphate from D-erythrose 4-phosphate: step 5/5. In terms of biological role, catalyzes the complicated ring closure reaction between the two acyclic compounds 1-deoxy-D-xylulose-5-phosphate (DXP) and 3-amino-2-oxopropyl phosphate (1-amino-acetone-3-phosphate or AAP) to form pyridoxine 5'-phosphate (PNP) and inorganic phosphate. The sequence is that of Pyridoxine 5'-phosphate synthase from Prochlorococcus marinus (strain MIT 9211).